A 259-amino-acid chain; its full sequence is tRNA pseudouridine synthase A (259 aa).

Catalysis depends on Asp-52, which acts as the Nucleophile. A substrate-binding site is contributed by Tyr-111.

The protein belongs to the tRNA pseudouridine synthase TruA family. Homodimer.

The enzyme catalyses uridine(38/39/40) in tRNA = pseudouridine(38/39/40) in tRNA. Its function is as follows. Formation of pseudouridine at positions 38, 39 and 40 in the anticodon stem and loop of transfer RNAs. In Ruegeria sp. (strain TM1040) (Silicibacter sp.), this protein is tRNA pseudouridine synthase A.